The primary structure comprises 149 residues: Large ribosomal subunit protein bL9 (149 aa).

This sequence belongs to the bacterial ribosomal protein bL9 family.

In terms of biological role, binds to the 23S rRNA. The polypeptide is Large ribosomal subunit protein bL9 (Anaeromyxobacter dehalogenans (strain 2CP-1 / ATCC BAA-258)).